A 175-amino-acid chain; its full sequence is Ribosome maturation factor RimM (175 aa).

In terms of domain architecture, PRC barrel spans 95–175; the sequence is EEGDYYWHDL…TITVDWDAGF (81 aa).

It belongs to the RimM family. In terms of assembly, binds ribosomal protein uS19.

Its subcellular location is the cytoplasm. An accessory protein needed during the final step in the assembly of 30S ribosomal subunit, possibly for assembly of the head region. Essential for efficient processing of 16S rRNA. May be needed both before and after RbfA during the maturation of 16S rRNA. It has affinity for free ribosomal 30S subunits but not for 70S ribosomes. The chain is Ribosome maturation factor RimM from Glaesserella parasuis serovar 5 (strain SH0165) (Haemophilus parasuis).